We begin with the raw amino-acid sequence, 458 residues long: tRNA modification GTPase MnmE (458 aa).

Positions 28, 85, and 124 each coordinate (6S)-5-formyl-5,6,7,8-tetrahydrofolate. Residues 220-381 (GMNVVIAGRP…LKEHLKAVMG (162 aa)) enclose the TrmE-type G domain. Asn230 contacts K(+). GTP-binding positions include 230 to 235 (NAGKSS), 249 to 255 (TDIEGTT), and 274 to 277 (DTAG). Ser234 contributes to the Mg(2+) binding site. K(+) contacts are provided by Thr249, Ile251, and Thr254. Thr255 lines the Mg(2+) pocket. Lys458 is a binding site for (6S)-5-formyl-5,6,7,8-tetrahydrofolate.

It belongs to the TRAFAC class TrmE-Era-EngA-EngB-Septin-like GTPase superfamily. TrmE GTPase family. Homodimer. Heterotetramer of two MnmE and two MnmG subunits. The cofactor is K(+).

The protein resides in the cytoplasm. Functionally, exhibits a very high intrinsic GTPase hydrolysis rate. Involved in the addition of a carboxymethylaminomethyl (cmnm) group at the wobble position (U34) of certain tRNAs, forming tRNA-cmnm(5)s(2)U34. This chain is tRNA modification GTPase MnmE, found in Chromohalobacter salexigens (strain ATCC BAA-138 / DSM 3043 / CIP 106854 / NCIMB 13768 / 1H11).